A 230-amino-acid chain; its full sequence is Sodium channel modifier 1 (230 aa).

Ser-2 bears the Phosphoserine mark. The Bipartite nuclear localization signal signature appears at 4–20; it reads KREGDDWSQLNVLKKRR. A Matrin-type zinc finger spans residues 42–74; it reads FACAICPHRPVLDTLAMLTAHRAGKKHLSSLQL. Lys-67 participates in a covalent cross-link: Glycyl lysine isopeptide (Lys-Gly) (interchain with G-Cter in SUMO2). Disordered regions lie at residues 76 to 106, 129 to 186, and 200 to 230; these read YGKK…EAPL, RRKY…SPTR, and GWIP…LPLD. The segment covering 81 to 102 has biased composition (basic and acidic residues); that stretch reads PGKERKQNPKHQNELRREETKA. Phosphoserine is present on Ser-144. Positions 164 to 174 are enriched in low complexity; that stretch reads PAAGPQAEESA. Ser-183 bears the Phosphoserine mark. Positions 188 to 230 are required for interaction with LUC7L2; sequence RALDHYLTLRSSGWIPDGRGRWVKDENVEFDSDEEEPPDLPLD. The segment covering 205-214 has biased composition (basic and acidic residues); the sequence is GRGRWVKDEN. The segment covering 215-230 has biased composition (acidic residues); sequence VEFDSDEEEPPDLPLD. Phosphoserine is present on Ser-219.

In terms of assembly, component of the minor spliceosome, which splices U12-type introns. Within this complex, interacts with RNF113A, as well as with SF3B1/SF3b155, SF3B2/SF3b145, SF3B3/SF3b130 and CDC5L. May interact with LUC7L2 and SNRNP70.

The protein localises to the nucleus. It is found in the nucleoplasm. It localises to the nucleus speckle. As a component of the minor spliceosome, involved in the splicing of U12-type introns in pre-mRNAs. Plays a role in the regulation of primary cilia length and Hedgehog signaling. In Homo sapiens (Human), this protein is Sodium channel modifier 1 (SCNM1).